We begin with the raw amino-acid sequence, 139 residues long: Flagellar basal body rod protein FlgB (139 aa).

It belongs to the flagella basal body rod proteins family. As to quaternary structure, the basal body constitutes a major portion of the flagellar organelle and consists of a number of rings mounted on a central rod. In Gram-negative bacteria, at least four rings, L, P, S and M are present, whereas Gram-positive bacteria lack the L and P rings. The rod consists of about 26 subunits of FlgG in the distal portion, and FlgB, FlgC and FlgF build up the proximal portion of the rod with about 6 subunits each. Rod assembly occurs by export via the flagellum-specific pathway of its constituent proteins and by their incorporation into the rod structure in the probable order of FlgB, FlgC, FlgF and FlgG. Another protein, FliE, also assembles onto the stable rod structure.

The protein localises to the bacterial flagellum basal body. Its function is as follows. Structural component of flagellum, the bacterial motility apparatus. Part of the rod structure of flagellar basal body. This Proteus mirabilis protein is Flagellar basal body rod protein FlgB.